A 106-amino-acid polypeptide reads, in one-letter code: Urease subunit beta (106 aa).

This sequence belongs to the urease beta subunit family. As to quaternary structure, heterotrimer of UreA (gamma), UreB (beta) and UreC (alpha) subunits. Three heterotrimers associate to form the active enzyme.

It is found in the cytoplasm. It catalyses the reaction urea + 2 H2O + H(+) = hydrogencarbonate + 2 NH4(+). The protein operates within nitrogen metabolism; urea degradation; CO(2) and NH(3) from urea (urease route): step 1/1. In Alkalilimnicola ehrlichii (strain ATCC BAA-1101 / DSM 17681 / MLHE-1), this protein is Urease subunit beta.